A 421-amino-acid chain; its full sequence is Histone-lysine N-methyltransferase SUV39H1 (421 aa).

The 59-residue stretch at 46 to 104 folds into the Chromo domain; sequence FEVEYLWNYKKVQDQELYLVKWKYYPDSESTWEPRHHLKCNNLLKQFHLDLERELLRRA. Positions 189–249 constitute a Pre-SET domain; it reads AGCKCRDCFS…SCPNRVVQKG (61 aa). C191, C193, C196, C203, C204, C231, C235, C237, and C241 together coordinate Zn(2+). One can recognise an SET domain in the interval 252-375; that stretch reads YKFCIFRTSD…TGEELTFDYN (124 aa). S-adenosyl-L-methionine-binding positions include 263-265, Y306, and 332-333; these read RGW and NH. Zn(2+)-binding residues include C335, C409, C411, and C416. A Post-SET domain is found at 405–421; sequence VRVECKCGVSSCRKYLF.

Belongs to the class V-like SAM-binding methyltransferase superfamily. Histone-lysine methyltransferase family. Suvar3-9 subfamily.

The protein resides in the nucleus. Its subcellular location is the chromosome. It localises to the centromere. It catalyses the reaction L-lysyl(9)-[histone H3] + 3 S-adenosyl-L-methionine = N(6),N(6),N(6)-trimethyl-L-lysyl(9)-[histone H3] + 3 S-adenosyl-L-homocysteine + 3 H(+). In terms of biological role, histone methyltransferase that specifically trimethylates 'Lys-9' of histone H3 using monomethylated H3 'Lys-9' as substrate. H3 'Lys-9' trimethylation represents a specific tag for epigenetic transcriptional repression by recruiting HP1 (CBX1, CBX3 and/or CBX5) proteins to methylated histones. Mainly functions in heterochromatin regions, thereby playing a central role in the establishment of constitutive heterochromatin at pericentric and telomere regions. H3 'Lys-9' trimethylation is also required to direct DNA methylation at pericentric repeats. SUV39H1 is targeted to histone H3 via its interaction with RB1 and is involved in many processes. The protein is Histone-lysine N-methyltransferase SUV39H1 (suv39h1) of Xenopus laevis (African clawed frog).